The primary structure comprises 369 residues: Tsukushi (369 aa).

The N-terminal stretch at M1–T19 is a signal peptide. The 41-residue stretch at K20–L60 folds into the LRRNT domain. 11 LRR repeats span residues D61–T81, T87–R108, Y111–S132, P134–S155, P161–S181, N184–P205, L206–G226, G229–S248, A254–G276, S279–Y300, and S303–Q323. An N-linked (GlcNAc...) asparagine glycan is attached at N76. An N-linked (GlcNAc...) asparagine glycan is attached at N189. N284 carries N-linked (GlcNAc...) asparagine glycosylation.

As to quaternary structure, forms a ternary complex with chordin/CHRD and BMP4. In terms of assembly, interacts with FZD4 (via FZ domain); competes with WNT2B for binding to FZD4, inhibiting Wnt signaling and repressing peripheral eye development. Interacts with BMP4; shows stronger interaction with BMP4 than isoform 2. Interacts with DVR1/VG1; the interaction is inhibited by BMP4. Interacts with BMP7. Interacts with FZD4 (via FZ domain); competes with WNT2B for binding to FZD4, inhibiting Wnt signaling and repressing peripheral eye development. Interacts with BMP4; shows weaker interaction with BMP4 than isoform 1. Interacts with DVR1/VG1; the interaction is inhibited by BMP4. Interacts with BMP7. In terms of processing, N-glycosylated. In terms of tissue distribution, during embryonic development, expressed in the middle primitive streak and Hensen's node. Expressed in the peripheral region of the developing eye. Expressed in the presomitic mesoderm during somitogenesis in a NOTCH-dependent manner.

It is found in the secreted. Functionally, contributes to various developmental events through its interactions with multiple signaling pathways. Dorsalizing factor involved in the induction of Hensen's node by inhibiting bone morphogenetic proteins during gastrulation and by enhancing DVR1/VG1 activity. Wnt signaling inhibitor which competes with WNT2B for binding to Wnt receptor FZD4 and represses WNT2B-dependent development of the peripheral eye. In terms of biological role, shows strong bone morphogenetic protein antagonistic activity. Its function is as follows. Shows weak bone morphogenetic protein antagonistic activity. The protein is Tsukushi (TSKU) of Gallus gallus (Chicken).